The following is a 141-amino-acid chain: Hemoglobin subunit alpha-D (141 aa).

Positions 1 to 141 (MLTADDKKLI…VASVLAEKYR (141 aa)) constitute a Globin domain. Residues H58 and H87 each coordinate heme b.

The protein belongs to the globin family. As to quaternary structure, heterotetramer of two alpha-D chains and two beta chains. Red blood cells.

In terms of biological role, involved in oxygen transport from the lung to the various peripheral tissues. The sequence is that of Hemoglobin subunit alpha-D (HBAD) from Rhea americana (Greater rhea).